Here is a 395-residue protein sequence, read N- to C-terminus: Protein BUR2 (395 aa).

2 disordered regions span residues 1–31 and 372–395; these read MSAT…ASSG and AKQE…KPKI. Phosphoserine is present on Ser-24.

As to quaternary structure, belongs to the BUR kinase complex composed of SGV1/BUR1 and BUR2. Interacts with SGV1.

Its subcellular location is the nucleus. In terms of biological role, component of the BUR kinase complex involved in transcription regulation. This complex phosphorylates 'Ser-120' of the UBC2/RAD6 ubiquitin-conjugating enzyme (E2), leading to monoubiquitination of histone H2B, the localization of the PAF1 complex to the chromatin, and the silencing of telomeric-associated genes. Also required for histone H3 'Lys-4' trimethylation. May phosphorylate the 'Ser-5' of the RBP1 carboxy-terminal domain (CTD) repeats. Necessary for the recovery from pheromone-induced growth arrest in the cell cycle G1 phase. Also required for vegetative growth itself. The kinase activity of the complex requires the presence of BUR2. Overexpression of BUR2 interferes with mitotic chromosome segregation. The polypeptide is Protein BUR2 (BUR2) (Saccharomyces cerevisiae (strain ATCC 204508 / S288c) (Baker's yeast)).